The primary structure comprises 186 residues: MRGLFVGRFQPVHNGHLKALEYVFEEVEEVIIGIGSAQVSHTLKNPFTTSERMEMLIRALDEKGIPRGKYFLVALPDINFNSIWAPYVEAIVPKFDIVFTGNSLVAQLFRERGYKVIVQPMFRKDILSATEIRRRMIEDQTWEELVPKSVVEYIKEIKGVERIKMLATDLEKNEKELQTPLRIPEF.

Belongs to the archaeal NMN adenylyltransferase family.

It localises to the cytoplasm. The catalysed reaction is beta-nicotinamide D-ribonucleotide + ATP + H(+) = diphosphate + NAD(+). It participates in cofactor biosynthesis; NAD(+) biosynthesis; NAD(+) from nicotinamide D-ribonucleotide: step 1/1. This chain is Nicotinamide-nucleotide adenylyltransferase, found in Thermococcus sibiricus (strain DSM 12597 / MM 739).